We begin with the raw amino-acid sequence, 565 residues long: Sensor histidine kinase MtrB (565 aa).

Residues 1-13 are compositionally biased toward basic residues; the sequence is MMWGSRRRTRSRW. A disordered region spans residues 1 to 21; that stretch reads MMWGSRRRTRSRWGRSGPMTR. 2 consecutive transmembrane segments (helical) span residues 42 to 62 and 213 to 233; these read VVAL…FVLT and GTMI…ALLV. Residues 235 to 287 form the HAMP domain; it reads RQVVVPVRSASRIAERFAEGHLSERMPVRGEDDMARLAMSFNDMAESLSRQIT. In terms of domain architecture, Histidine kinase spans 302-519; it reads DVSHELRTPL…CFRLTLPLVR (218 aa). Histidine 305 is subject to Phosphohistidine; by autocatalysis. The tract at residues 524-565 is disordered; that stretch reads TTSPLPMKPIPQPSPSGGQSPSTGPQHAKDRARQREHAERSL. The segment covering 538 to 549 has biased composition (low complexity); sequence PSGGQSPSTGPQ. Over residues 550 to 565 the composition is skewed to basic and acidic residues; it reads HAKDRARQREHAERSL.

Its subcellular location is the cell membrane. It catalyses the reaction ATP + protein L-histidine = ADP + protein N-phospho-L-histidine.. In terms of biological role, member of the two-component regulatory system MtrA/MtrB. Seems to function as a membrane-associated protein kinase that phosphorylates MtrA in response to environmental signals. This is Sensor histidine kinase MtrB (mtrB) from Mycolicibacterium paratuberculosis (strain ATCC BAA-968 / K-10) (Mycobacterium paratuberculosis).